Here is a 149-residue protein sequence, read N- to C-terminus: Transcriptional repressor NrdR (149 aa).

A zinc finger lies at Cys-3–Cys-34. Residues Pro-49 to Gln-139 enclose the ATP-cone domain.

Belongs to the NrdR family. It depends on Zn(2+) as a cofactor.

Negatively regulates transcription of bacterial ribonucleotide reductase nrd genes and operons by binding to NrdR-boxes. The protein is Transcriptional repressor NrdR of Pasteurella multocida (strain Pm70).